We begin with the raw amino-acid sequence, 298 residues long: 4-hydroxy-tetrahydrodipicolinate synthase (298 aa).

Residue threonine 51 coordinates pyruvate. Tyrosine 139 serves as the catalytic Proton donor/acceptor. The Schiff-base intermediate with substrate role is filled by lysine 167. Isoleucine 209 contributes to the pyruvate binding site.

This sequence belongs to the DapA family. In terms of assembly, homotetramer; dimer of dimers.

Its subcellular location is the cytoplasm. It catalyses the reaction L-aspartate 4-semialdehyde + pyruvate = (2S,4S)-4-hydroxy-2,3,4,5-tetrahydrodipicolinate + H2O + H(+). It functions in the pathway amino-acid biosynthesis; L-lysine biosynthesis via DAP pathway; (S)-tetrahydrodipicolinate from L-aspartate: step 3/4. Its function is as follows. Catalyzes the condensation of (S)-aspartate-beta-semialdehyde [(S)-ASA] and pyruvate to 4-hydroxy-tetrahydrodipicolinate (HTPA). This Haemophilus influenzae (strain 86-028NP) protein is 4-hydroxy-tetrahydrodipicolinate synthase.